The primary structure comprises 382 residues: Na(+)/H(+) antiporter NhaA (382 aa).

11 helical membrane-spanning segments follow: residues 13 to 33, 58 to 78, 94 to 114, 124 to 144, 153 to 173, 179 to 199, 204 to 224, 256 to 276, 285 to 305, 325 to 345, and 357 to 377; these read IGGI…NSPF, LLLW…GLEI, LVPA…FIFF, GWAI…SLLG, ILLT…IALF, SLLS…LNYF, ISVF…SGVH, VVFL…FVGL, VVLG…FLSL, VYGI…IGSL, and MVKI…FLVL.

Belongs to the NhaA Na(+)/H(+) (TC 2.A.33) antiporter family.

The protein localises to the cell inner membrane. It carries out the reaction Na(+)(in) + 2 H(+)(out) = Na(+)(out) + 2 H(+)(in). Its function is as follows. Na(+)/H(+) antiporter that extrudes sodium in exchange for external protons. This is Na(+)/H(+) antiporter NhaA from Legionella pneumophila (strain Paris).